A 1186-amino-acid chain; its full sequence is Myelin transcription factor 1-like protein (1186 aa).

A disordered region spans residues 1-21; the sequence is MEVDTEEKRHRTRSKGVRVPV. Residues 22-65 form a CCHHC-type 1 zinc finger; it reads EPAIQELFSCPTPGCDGSGHVSGKYARHRSVYGCPLAKKRKTQD. The Zn(2+) site is built by C31, C36, H49, and C55. 2 disordered regions span residues 56-175 and 220-247; these read PLAK…QMNC and RTESEMNSNTSNSLEDDSDKNENLGRKS. Over residues 86–169 the composition is skewed to acidic residues; the sequence is SVDECDDSDG…EEEEEEEENE (84 aa). S250 is modified (phosphoserine). Disordered stretches follow at residues 342 to 372 and 449 to 513; these read SETNPQERNPQQNMNIRQHVRPEEDFPGRTP and REKM…GCDG. Over residues 343–357 the composition is skewed to polar residues; the sequence is ETNPQERNPQQNMNI. 3 stretches are compositionally biased toward basic and acidic residues: residues 361-372, 449-487, and 495-505; these read VRPEEDFPGRTP, REKMAMEAGRRDNMRSYEDQSPRQLPGEDRKPKSSDSHV, and DPSRTEKKESK. 2 CCHHC-type zinc fingers span residues 497 to 540 and 541 to 584; these read SRTE…PPEI and LAMH…KLAK. Residues C506, C511, H524, C530, C550, C555, H568, and C574 each coordinate Zn(2+). 2 disordered regions span residues 659–709 and 753–780; these read RAIA…GGGS and KPQDLCATRNPDMEVDENGTLDLSMNKQ. Basic and acidic residues predominate over residues 666-683; it reads QTRDISPKGYDDAKRYCK. Low complexity predominate over residues 685 to 709; that stretch reads PSPSSSSTSSYAPSSSSNLSCGGGS. 3 CCHHC-type zinc fingers span residues 896–939, 945–988, and 998–1041; these read LATS…GIRI, DKED…QKDG, and KSVK…MKKA. Residues C905, C910, H923, C929, C954, C959, H972, C978, C1007, C1012, H1025, and C1031 each contribute to the Zn(2+) site. Positions 1056–1130 form a coiled coil; it reads SNGIENDEEI…LANLSQSLIH (75 aa).

Belongs to the MYT1 family. In terms of assembly, interacts with SIN3B.

The protein resides in the nucleus. The protein localises to the chromosome. In terms of biological role, transcription factor that plays a key role in neuronal differentiation by specifically repressing expression of non-neuronal genes during neuron differentiation. In contrast to other transcription repressors that inhibit specific lineages, mediates repression of multiple differentiation programs. Also represses expression of negative regulators of neurogenesis, such as members of the Notch signaling pathway, including HES1. The combination of three transcription factors, ASCL1, POU3F2/BRN2 and MYT1L, is sufficient to reprogram fibroblasts and other somatic cells into induced neuronal (iN) cells in vitro. Directly binds the 5'-AAGTT-3' core motif present on the promoter of target genes and represses transcription by recruiting a multiprotein complex containing SIN3B. The 5'-AAGTT-3' core motif is absent from the promoter of neural genes. The polypeptide is Myelin transcription factor 1-like protein (Homo sapiens (Human)).